Here is a 314-residue protein sequence, read N- to C-terminus: tRNA dimethylallyltransferase (314 aa).

9-16 lines the ATP pocket; it reads GPTAVGKT. Substrate is bound at residue 11-16; it reads TAVGKT. The interval 34-37 is interaction with substrate tRNA; the sequence is DSVQ.

It belongs to the IPP transferase family. Monomer. The cofactor is Mg(2+).

It catalyses the reaction adenosine(37) in tRNA + dimethylallyl diphosphate = N(6)-dimethylallyladenosine(37) in tRNA + diphosphate. Functionally, catalyzes the transfer of a dimethylallyl group onto the adenine at position 37 in tRNAs that read codons beginning with uridine, leading to the formation of N6-(dimethylallyl)adenosine (i(6)A). This is tRNA dimethylallyltransferase from Desulfitobacterium hafniense (strain DSM 10664 / DCB-2).